The primary structure comprises 263 residues: Ycf3-interacting protein 1, chloroplastic (263 aa).

The N-terminal 71 residues, 1 to 71, are a transit peptide targeting the chloroplast; it reads MASNMLQLSL…VNKEEDSATY (71 aa). A helical transmembrane segment spans residues 238–258; that stretch reads ALYLVSAFPIIIGISVVLILF.

The protein belongs to the Y3IP1/CEST family. Interacts with Ycf3.

The protein localises to the plastid. The protein resides in the chloroplast thylakoid membrane. In terms of biological role, nuclear genome-encoded factor that participates in photosystem I (PSI) biogenesis. Cooperates with the plastid genome-encoded protein PSI assembly Ycf3 in the assembly of stable PSI units in the thylakoid membrane. The sequence is that of Ycf3-interacting protein 1, chloroplastic from Nicotiana tabacum (Common tobacco).